Consider the following 129-residue polypeptide: Small ribosomal subunit protein uS11 (129 aa).

Belongs to the universal ribosomal protein uS11 family. In terms of assembly, part of the 30S ribosomal subunit. Interacts with proteins S7 and S18. Binds to IF-3.

Its function is as follows. Located on the platform of the 30S subunit, it bridges several disparate RNA helices of the 16S rRNA. Forms part of the Shine-Dalgarno cleft in the 70S ribosome. The sequence is that of Small ribosomal subunit protein uS11 from Bacillus cytotoxicus (strain DSM 22905 / CIP 110041 / 391-98 / NVH 391-98).